Consider the following 576-residue polypeptide: Arginine--tRNA ligase (576 aa).

A 'HIGH' region motif is present at residues 121 to 131 (PNLAKEMHVGH).

This sequence belongs to the class-I aminoacyl-tRNA synthetase family. Monomer.

The protein resides in the cytoplasm. It carries out the reaction tRNA(Arg) + L-arginine + ATP = L-arginyl-tRNA(Arg) + AMP + diphosphate. This is Arginine--tRNA ligase from Alteromonas mediterranea (strain DSM 17117 / CIP 110805 / LMG 28347 / Deep ecotype).